The chain runs to 219 residues: Proline-rich protein 27 (219 aa).

An N-terminal signal peptide occupies residues 1–15; that stretch reads MKLLLWACIVCVAFA. Over residues 155–204 the composition is skewed to low complexity; that stretch reads AAEPAAEAPVGAEPAAEAPVAAEPAAEAPVGVEPAAEEPSPAEPATAKPA. The segment at 155-219 is disordered; that stretch reads AAEPAAEAPV…PSPSLEQANQ (65 aa).

The protein localises to the secreted. The chain is Proline-rich protein 27 (PRR27) from Homo sapiens (Human).